A 93-amino-acid chain; its full sequence is Insertion element ISR1 uncharacterized 11 kDa protein A1 (93 aa).

Disordered stretches follow at residues 14 to 33 (RRAR…QERR) and 68 to 93 (RRRA…SAGR).

This is Insertion element ISR1 uncharacterized 11 kDa protein A1 from Rhizobium sp.